Here is a 431-residue protein sequence, read N- to C-terminus: Histidine--tRNA ligase (431 aa).

The protein belongs to the class-II aminoacyl-tRNA synthetase family. Homodimer.

It is found in the cytoplasm. The catalysed reaction is tRNA(His) + L-histidine + ATP = L-histidyl-tRNA(His) + AMP + diphosphate + H(+). The sequence is that of Histidine--tRNA ligase from Neisseria gonorrhoeae (strain ATCC 700825 / FA 1090).